Consider the following 349-residue polypeptide: Biotin synthase (349 aa).

Positions 1-11 are enriched in basic and acidic residues; sequence MLEGIEREAAE. A disordered region spans residues 1–30; sequence MLEGIEREAAEHSNGCSGPAGHAPPAGAPR. In terms of domain architecture, Radical SAM core spans 64-283; the sequence is HEVQLCTLLS…IAVARVMMPR (220 aa). Residues Cys79, Cys83, and Cys86 each coordinate [4Fe-4S] cluster. 4 residues coordinate [2Fe-2S] cluster: Cys123, Cys155, Cys215, and Arg287.

The protein belongs to the radical SAM superfamily. Biotin synthase family. In terms of assembly, homodimer. [4Fe-4S] cluster serves as cofactor. It depends on [2Fe-2S] cluster as a cofactor.

It catalyses the reaction (4R,5S)-dethiobiotin + (sulfur carrier)-SH + 2 reduced [2Fe-2S]-[ferredoxin] + 2 S-adenosyl-L-methionine = (sulfur carrier)-H + biotin + 2 5'-deoxyadenosine + 2 L-methionine + 2 oxidized [2Fe-2S]-[ferredoxin]. The protein operates within cofactor biosynthesis; biotin biosynthesis; biotin from 7,8-diaminononanoate: step 2/2. Functionally, catalyzes the conversion of dethiobiotin (DTB) to biotin by the insertion of a sulfur atom into dethiobiotin via a radical-based mechanism. The chain is Biotin synthase from Sorangium cellulosum (strain So ce56) (Polyangium cellulosum (strain So ce56)).